Consider the following 142-residue polypeptide: MAKKVQAYVKLQVAAGMANPSPPVGPALGQQGVNIMEFCKAFNAKTDSMEKGLPIPVVITVYADRSFTFVTKTPPAAVLLKKAAGIKSGSGKPNKDKVGTITRAQLQEIAQTKAADMTGADIEAMTRSIEGTARSMGLVVED.

This sequence belongs to the universal ribosomal protein uL11 family. As to quaternary structure, part of the ribosomal stalk of the 50S ribosomal subunit. Interacts with L10 and the large rRNA to form the base of the stalk. L10 forms an elongated spine to which L12 dimers bind in a sequential fashion forming a multimeric L10(L12)X complex. In terms of processing, one or more lysine residues are methylated.

Functionally, forms part of the ribosomal stalk which helps the ribosome interact with GTP-bound translation factors. This chain is Large ribosomal subunit protein uL11, found in Cronobacter sakazakii (strain ATCC BAA-894) (Enterobacter sakazakii).